The chain runs to 262 residues: Methylthioribulose-1-phosphate dehydratase (262 aa).

Residue cysteine 115 participates in substrate binding. 2 residues coordinate Zn(2+): histidine 133 and histidine 135. The active-site Proton donor/acceptor is glutamate 158. Histidine 223 contacts Zn(2+).

This sequence belongs to the aldolase class II family. MtnB subfamily. Zn(2+) serves as cofactor.

It is found in the cytoplasm. It carries out the reaction 5-(methylsulfanyl)-D-ribulose 1-phosphate = 5-methylsulfanyl-2,3-dioxopentyl phosphate + H2O. It participates in amino-acid biosynthesis; L-methionine biosynthesis via salvage pathway; L-methionine from S-methyl-5-thio-alpha-D-ribose 1-phosphate: step 2/6. Catalyzes the dehydration of methylthioribulose-1-phosphate (MTRu-1-P) into 2,3-diketo-5-methylthiopentyl-1-phosphate (DK-MTP-1-P). The polypeptide is Methylthioribulose-1-phosphate dehydratase (Meyerozyma guilliermondii (strain ATCC 6260 / CBS 566 / DSM 6381 / JCM 1539 / NBRC 10279 / NRRL Y-324) (Yeast)).